A 171-amino-acid polypeptide reads, in one-letter code: 3-hydroxydecanoyl-[acyl-carrier-protein] dehydratase (171 aa).

H70 is an active-site residue.

The protein belongs to the thioester dehydratase family. FabA subfamily. As to quaternary structure, homodimer.

The protein localises to the cytoplasm. The enzyme catalyses a (3R)-hydroxyacyl-[ACP] = a (2E)-enoyl-[ACP] + H2O. It catalyses the reaction (3R)-hydroxydecanoyl-[ACP] = (2E)-decenoyl-[ACP] + H2O. It carries out the reaction (2E)-decenoyl-[ACP] = (3Z)-decenoyl-[ACP]. It participates in lipid metabolism; fatty acid biosynthesis. Necessary for the introduction of cis unsaturation into fatty acids. Catalyzes the dehydration of (3R)-3-hydroxydecanoyl-ACP to E-(2)-decenoyl-ACP and then its isomerization to Z-(3)-decenoyl-ACP. Can catalyze the dehydratase reaction for beta-hydroxyacyl-ACPs with saturated chain lengths up to 16:0, being most active on intermediate chain length. The sequence is that of 3-hydroxydecanoyl-[acyl-carrier-protein] dehydratase from Shewanella putrefaciens (strain CN-32 / ATCC BAA-453).